Consider the following 185-residue polypeptide: Dual specificity protein phosphatase 3 (185 aa).

Residues 28–179 (QPCNEVVPRV…LCQLNDRLAK (152 aa)) enclose the Tyrosine-protein phosphatase domain. Catalysis depends on Cys124, which acts as the Phosphocysteine intermediate.

Belongs to the protein-tyrosine phosphatase family. Non-receptor class dual specificity subfamily. As to quaternary structure, microtubule inner protein component of sperm flagellar doublet microtubules. Interacts with VRK3; this interaction activates DUSP3 phosphatase activity.

The protein localises to the nucleus. It localises to the cytoplasm. It is found in the cytoskeleton. Its subcellular location is the flagellum axoneme. It carries out the reaction O-phospho-L-tyrosyl-[protein] + H2O = L-tyrosyl-[protein] + phosphate. The enzyme catalyses O-phospho-L-seryl-[protein] + H2O = L-seryl-[protein] + phosphate. The catalysed reaction is O-phospho-L-threonyl-[protein] + H2O = L-threonyl-[protein] + phosphate. Shows activity both for tyrosine-protein phosphate and serine-protein phosphate, but displays a strong preference toward phosphotyrosines. Specifically dephosphorylates and inactivates ERK1 and ERK2. The protein is Dual specificity protein phosphatase 3 (Dusp3) of Mus musculus (Mouse).